A 483-amino-acid polypeptide reads, in one-letter code: UDP-N-acetylmuramate--L-alanine ligase (483 aa).

Residue 112 to 118 (GTHGKTT) participates in ATP binding.

Belongs to the MurCDEF family.

It is found in the cytoplasm. The enzyme catalyses UDP-N-acetyl-alpha-D-muramate + L-alanine + ATP = UDP-N-acetyl-alpha-D-muramoyl-L-alanine + ADP + phosphate + H(+). The protein operates within cell wall biogenesis; peptidoglycan biosynthesis. Cell wall formation. In Ralstonia pickettii (strain 12J), this protein is UDP-N-acetylmuramate--L-alanine ligase.